The chain runs to 387 residues: Exodeoxyribonuclease 7 large subunit (387 aa).

Belongs to the XseA family. In terms of assembly, heterooligomer composed of large and small subunits.

The protein resides in the cytoplasm. The catalysed reaction is Exonucleolytic cleavage in either 5'- to 3'- or 3'- to 5'-direction to yield nucleoside 5'-phosphates.. In terms of biological role, bidirectionally degrades single-stranded DNA into large acid-insoluble oligonucleotides, which are then degraded further into small acid-soluble oligonucleotides. In Campylobacter jejuni subsp. doylei (strain ATCC BAA-1458 / RM4099 / 269.97), this protein is Exodeoxyribonuclease 7 large subunit.